The chain runs to 302 residues: Bifunctional protein FolD (302 aa).

NADP(+) contacts are provided by residues 171-173, S196, and I237; that span reads GRS.

The protein belongs to the tetrahydrofolate dehydrogenase/cyclohydrolase family. In terms of assembly, homodimer.

It carries out the reaction (6R)-5,10-methylene-5,6,7,8-tetrahydrofolate + NADP(+) = (6R)-5,10-methenyltetrahydrofolate + NADPH. The enzyme catalyses (6R)-5,10-methenyltetrahydrofolate + H2O = (6R)-10-formyltetrahydrofolate + H(+). It participates in one-carbon metabolism; tetrahydrofolate interconversion. Catalyzes the oxidation of 5,10-methylenetetrahydrofolate to 5,10-methenyltetrahydrofolate and then the hydrolysis of 5,10-methenyltetrahydrofolate to 10-formyltetrahydrofolate. This chain is Bifunctional protein FolD, found in Sphingopyxis alaskensis (strain DSM 13593 / LMG 18877 / RB2256) (Sphingomonas alaskensis).